We begin with the raw amino-acid sequence, 317 residues long: Protein CbxX, plasmid (317 aa).

85–92 contacts ATP; sequence GNPGTGKT.

It belongs to the CbxX/CfxQ family.

Its function is as follows. Seems to be necessary for the expression of RuBisCO. This chain is Protein CbxX, plasmid (cbxXP), found in Cupriavidus necator (strain ATCC 17699 / DSM 428 / KCTC 22496 / NCIMB 10442 / H16 / Stanier 337) (Ralstonia eutropha).